The primary structure comprises 52 residues: Ornatin-C (52 aa).

The Cell attachment site signature appears at 42-44 (RGD).

The protein belongs to the ornatin family.

It localises to the secreted. Potent inhibitor of fibrinogen interaction with platelet receptors expressed on glycoprotein IIb-IIIa complex. May prevent blood from clotting during either feeding and/or storage of ingested blood. The protein is Ornatin-C of Placobdella ornata (Turtle leech).